A 180-amino-acid polypeptide reads, in one-letter code: Large ribosomal subunit protein bL17 (180 aa).

The segment at 134-180 is disordered; sequence AQAKAKKAAAMPTEESEAKPAEEGDVVGASEPDAKAPEEPPAEAPEN.

Belongs to the bacterial ribosomal protein bL17 family. As to quaternary structure, part of the 50S ribosomal subunit. Contacts protein L32.

In Mycobacterium tuberculosis (strain ATCC 25177 / H37Ra), this protein is Large ribosomal subunit protein bL17.